Here is a 392-residue protein sequence, read N- to C-terminus: Methylthioribose-1-phosphate isomerase (392 aa).

The active-site Proton donor is D267.

The protein belongs to the eIF-2B alpha/beta/delta subunits family. MtnA subfamily.

The protein localises to the cytoplasm. It is found in the nucleus. The enzyme catalyses 5-(methylsulfanyl)-alpha-D-ribose 1-phosphate = 5-(methylsulfanyl)-D-ribulose 1-phosphate. It functions in the pathway amino-acid biosynthesis; L-methionine biosynthesis via salvage pathway; L-methionine from S-methyl-5-thio-alpha-D-ribose 1-phosphate: step 1/6. Catalyzes the interconversion of methylthioribose-1-phosphate (MTR-1-P) into methylthioribulose-1-phosphate (MTRu-1-P). This Blastomyces gilchristii (strain SLH14081) (Blastomyces dermatitidis) protein is Methylthioribose-1-phosphate isomerase.